The sequence spans 405 residues: 4-hydroxy-3-methylbut-2-en-1-yl diphosphate synthase (ferredoxin) (405 aa).

Cys314, Cys317, Cys348, and Glu355 together coordinate [4Fe-4S] cluster.

Belongs to the IspG family. Requires [4Fe-4S] cluster as cofactor.

It catalyses the reaction (2E)-4-hydroxy-3-methylbut-2-enyl diphosphate + 2 oxidized [2Fe-2S]-[ferredoxin] + H2O = 2-C-methyl-D-erythritol 2,4-cyclic diphosphate + 2 reduced [2Fe-2S]-[ferredoxin] + H(+). The protein operates within isoprenoid biosynthesis; isopentenyl diphosphate biosynthesis via DXP pathway; isopentenyl diphosphate from 1-deoxy-D-xylulose 5-phosphate: step 5/6. In terms of biological role, converts 2C-methyl-D-erythritol 2,4-cyclodiphosphate (ME-2,4cPP) into 1-hydroxy-2-methyl-2-(E)-butenyl 4-diphosphate. In Prochlorococcus marinus subsp. pastoris (strain CCMP1986 / NIES-2087 / MED4), this protein is 4-hydroxy-3-methylbut-2-en-1-yl diphosphate synthase (ferredoxin).